We begin with the raw amino-acid sequence, 325 residues long: Lipid droplet-associated hydrolase (325 aa).

The Nucleophile role is filled by serine 139. Active-site charge relay system residues include aspartate 271 and histidine 300.

This sequence belongs to the AB hydrolase superfamily. LDAH family.

It localises to the lipid droplet. Its subcellular location is the endoplasmic reticulum. The enzyme catalyses a cholesterol ester + H2O = cholesterol + a fatty acid + H(+). Probable serine lipid hydrolase associated with lipid droplets. Has low cholesterol esterase activity. Appears to lack triglyceride lipase activity. Involved in cholesterol and triglyceride homeostasis; stimulates cellular triglyceride accumulation and cellular cholesterol release. Acts antagonistically with PNPLA2/ATGL in regulation of cellular lipid stores. May regulate triglyceride accumulation indirectly through stimulation of PNPLA2/ATGL ubiquitination and proteasomal degradation. Promotes microtubule-dependent lipid droplet fusion. Highly expressed in macrophage-rich areas in atherosclerotic lesions, suggesting that it could promote cholesterol ester turnover in macrophages. This is Lipid droplet-associated hydrolase from Rattus norvegicus (Rat).